We begin with the raw amino-acid sequence, 100 residues long: Urease subunit gamma (100 aa).

It belongs to the urease gamma subunit family. In terms of assembly, heterotrimer of UreA (gamma), UreB (beta) and UreC (alpha) subunits. Three heterotrimers associate to form the active enzyme.

Its subcellular location is the cytoplasm. It carries out the reaction urea + 2 H2O + H(+) = hydrogencarbonate + 2 NH4(+). It participates in nitrogen metabolism; urea degradation; CO(2) and NH(3) from urea (urease route): step 1/1. The protein is Urease subunit gamma of Methylocella silvestris (strain DSM 15510 / CIP 108128 / LMG 27833 / NCIMB 13906 / BL2).